Consider the following 311-residue polypeptide: Pyrimidine-specific ribonucleoside hydrolase RihA (311 aa).

Residue His240 is part of the active site.

The protein belongs to the IUNH family. RihA subfamily.

Its function is as follows. Hydrolyzes cytidine or uridine to ribose and cytosine or uracil, respectively. The sequence is that of Pyrimidine-specific ribonucleoside hydrolase RihA from Salmonella paratyphi A (strain ATCC 9150 / SARB42).